Reading from the N-terminus, the 287-residue chain is Alpha-tubulin N-acetyltransferase 2 (287 aa).

The region spanning 2–193 (VEFAFDIKHL…NNFVLYEGFF (192 aa)) is the N-acetyltransferase domain. Acetyl-CoA contacts are provided by residues 127-140 (FYVH…GQGK) and 163-172 (SNKMLAFMAK).

It belongs to the acetyltransferase ATAT1 family.

The protein resides in the midbody. It localises to the midbody ring. The enzyme catalyses L-lysyl-[alpha-tubulin] + acetyl-CoA = N(6)-acetyl-L-lysyl-[alpha-tubulin] + CoA + H(+). Functionally, specifically acetylates 'Lys-40' in alpha-tubulin on the lumenal side of microtubules. Promotes microtubule destabilization and accelerates microtubule dynamics; this activity may be independent of acetylation activity. Acetylates alpha-tubulin with a slow enzymatic rate, due to a catalytic site that is not optimized for acetyl transfer. Enters the microtubule through each end and diffuses quickly throughout the lumen of microtubules. Acetylates only long/old microtubules because of its slow acetylation rate since it does not have time to act on dynamically unstable microtubules before the enzyme is released. Main acetyltransferase responsible for alpha-tubulin 'Lys-40' acetylation in germline cells during the early stages of oogenesis. Required for normal egg chamber separation. The protein is Alpha-tubulin N-acetyltransferase 2 of Drosophila melanogaster (Fruit fly).